Reading from the N-terminus, the 161-residue chain is Small heat shock protein ibp (161 aa).

In terms of domain architecture, sHSP spans 35–150 (EKPLSDTPAY…KPKKIFINIP (116 aa)).

This sequence belongs to the small heat shock protein (HSP20) family.

The sequence is that of Small heat shock protein ibp (ibp) from Buchnera aphidicola subsp. Schizaphis graminum (strain Sg).